The primary structure comprises 289 residues: tRNA pseudouridine synthase B (289 aa).

Asp38 acts as the Nucleophile in catalysis.

Belongs to the pseudouridine synthase TruB family. Type 1 subfamily.

The enzyme catalyses uridine(55) in tRNA = pseudouridine(55) in tRNA. Functionally, responsible for synthesis of pseudouridine from uracil-55 in the psi GC loop of transfer RNAs. The chain is tRNA pseudouridine synthase B from Acaryochloris marina (strain MBIC 11017).